Consider the following 73-residue polypeptide: Antimicrobial peptide TsAP-1 (73 aa).

Residues 1 to 22 (MQIKHLITLFFLVLIVADQCSA) form the signal peptide. Position 39 is a lysine amide (lysine 39). A propeptide spanning residues 45 to 73 (EISAQIEQYKDLQKREAELEELLDRLPMY) is cleaved from the precursor.

Expressed by the venom gland.

Its subcellular location is the secreted. Its function is as follows. Has a low antimicrobial activity against S.aureus, E.coli, and C.albicans (MICs 120-160 uM). Has a low hemolytic activity (4% at 160 uM). Also inhibits the growth of two cancer cell lines on a total of five (the squamous carcinoma cell line H157 (IC(50)=55.9 uM) and the lung adenocarcinoma cell line H838 (IC(50)=52.5 uM)). This Tityus serrulatus (Brazilian scorpion) protein is Antimicrobial peptide TsAP-1.